Here is a 216-residue protein sequence, read N- to C-terminus: Ribose-5-phosphate isomerase A (216 aa).

Substrate-binding positions include 26 to 29 (TGST), 79 to 82 (DGAD), and 92 to 95 (KGGG). Glu-101 functions as the Proton acceptor in the catalytic mechanism. Lys-119 is a substrate binding site.

The protein belongs to the ribose 5-phosphate isomerase family. As to quaternary structure, homodimer.

It catalyses the reaction aldehydo-D-ribose 5-phosphate = D-ribulose 5-phosphate. The protein operates within carbohydrate degradation; pentose phosphate pathway; D-ribose 5-phosphate from D-ribulose 5-phosphate (non-oxidative stage): step 1/1. In terms of biological role, catalyzes the reversible conversion of ribose-5-phosphate to ribulose 5-phosphate. The sequence is that of Ribose-5-phosphate isomerase A from Legionella pneumophila subsp. pneumophila (strain Philadelphia 1 / ATCC 33152 / DSM 7513).